Here is a 473-residue protein sequence, read N- to C-terminus: Lactate utilization protein B (473 aa).

2 4Fe-4S ferredoxin-type domains span residues 302–332 (GSEF…GHSY) and 351–380 (YDDY…LHDL). Positions 311, 314, 317, 321, 364, 367, and 371 each coordinate [4Fe-4S] cluster.

Belongs to the LutB/YkgF family.

Functionally, is involved in L-lactate degradation and allows cells to grow with lactate as the sole carbon source. Has probably a role as an electron transporter during oxidation of L-lactate. The chain is Lactate utilization protein B from Bacillus cereus (strain G9842).